The primary structure comprises 264 residues: Pro-opiomelanocortin (264 aa).

A signal peptide spans 1-26; sequence MPRSCCSRSGALLLALLLQASMEVRG. At Phe87 the chain carries Phenylalanine amide. Disordered stretches follow at residues 88 to 204 and 219 to 238; these read GRRN…DLEH and RMEHFRWGSPPKDKRYGGFM. An N-linked (GlcNAc...) asparagine glycan is attached at Asn91. Composition is skewed to basic and acidic residues over residues 99-122 and 130-142; these read QKREDVAAGEDRGLLPEGGPEPRG and REGKRSYSMEHFR. Glu131 is modified (glutamic acid 1-amide). Ser135 is subject to N-acetylserine; in Corticotropin. Val147 carries the valine amide modification. Ser165 bears the Phosphoserine mark. A compositionally biased stretch (basic and acidic residues) spans 172 to 186; sequence EFKRELTGQRPRAGD. The segment covering 189–199 has biased composition (low complexity); that stretch reads DGPADDGAGPR. Over residues 219 to 234 the composition is skewed to basic and acidic residues; it reads RMEHFRWGSPPKDKRY.

The protein belongs to the POMC family. Post-translationally, specific enzymatic cleavages at paired basic residues yield the different active peptides. As to expression, ACTH and MSH are produced by the pituitary gland.

Its subcellular location is the secreted. Stimulates the adrenal glands to release cortisol. In terms of biological role, anorexigenic peptide. Increases the pigmentation of skin by increasing melanin production in melanocytes. Functionally, increases the pigmentation of skin by increasing melanin production in melanocytes. Its function is as follows. Endogenous orexigenic opiate. Endogenous opiate. The sequence is that of Pro-opiomelanocortin (POMC) from Macaca nemestrina (Pig-tailed macaque).